Reading from the N-terminus, the 142-residue chain is Hemoglobin subunit alpha (142 aa).

The Globin domain maps to Val-2–Arg-142. Ser-4 bears the Phosphoserine mark. An N6-succinyllysine modification is found at Lys-8. Thr-9 bears the Phosphothreonine mark. An N6-succinyllysine modification is found at Lys-12. N6-acetyllysine; alternate is present on Lys-17. Lys-17 bears the N6-succinyllysine; alternate mark. The residue at position 25 (Tyr-25) is a Phosphotyrosine. A Phosphoserine modification is found at Ser-36. Position 41 is an N6-succinyllysine (Lys-41). Ser-50 is subject to Phosphoserine. His-59 provides a ligand contact to O2. Residue His-88 coordinates heme b. A Phosphoserine modification is found at Ser-103. The residue at position 109 (Thr-109) is a Phosphothreonine. A phosphoserine mark is found at Ser-125 and Ser-132. Residues Thr-135 and Thr-138 each carry the phosphothreonine modification. Residue Ser-139 is modified to Phosphoserine.

It belongs to the globin family. Heterotetramer of two alpha chains and two beta chains. Red blood cells.

Involved in oxygen transport from the lung to the various peripheral tissues. Functionally, hemopressin acts as an antagonist peptide of the cannabinoid receptor CNR1. Hemopressin-binding efficiently blocks cannabinoid receptor CNR1 and subsequent signaling. This Sapajus apella (Brown-capped capuchin) protein is Hemoglobin subunit alpha (HBA).